Reading from the N-terminus, the 916-residue chain is Ubiquitin carboxyl-terminal hydrolase 20 (916 aa).

Residues 6 to 111 form a UBP-type zinc finger; the sequence is DLCPHLDCIG…SSSARLSEQD (106 aa). Zn(2+) contacts are provided by Cys-8, His-10, Cys-30, Cys-33, Cys-43, Cys-48, Cys-53, His-60, His-64, His-70, Cys-83, and Cys-86. 3 positions are modified to phosphoserine: Ser-112, Ser-132, and Ser-134. The region spanning 145–687 is the USP domain; it reads TGMKNLGNSC…EAYVLFYRKS (543 aa). Cys-154 acts as the Nucleophile in catalysis. The tract at residues 258–420 is disordered; the sequence is LTDARDSDSS…PPRASPVRMG (163 aa). Thr-259 bears the Phosphothreonine mark. Over residues 260–280 the composition is skewed to basic and acidic residues; it reads DARDSDSSDTDERRDGDRSPS. Phosphoserine is present on Ser-306. Basic and acidic residues predominate over residues 317-333; the sequence is EAGRAISEKERMKDRKF. Phosphoserine is present on Ser-369. Thr-378 carries the phosphothreonine modification. Ser-410 and Ser-415 each carry phosphoserine. The active-site Proton acceptor is His-645. 2 DUSP domains span residues 689–782 and 791–894; these read EEAM…LYVC and ALAK…RQSV.

This sequence belongs to the peptidase C19 family. USP20/USP33 subfamily. Interacts with VHL, leading to its ubiquitination and subsequent degradation. Interacts with CCP110. Interacts with DIO2. Interacts with HIF1A. Interacts with ADRB2. Interacts with USP18. In terms of processing, ubiquitinated via a VHL-dependent pathway for proteasomal degradation.

It is found in the cytoplasm. Its subcellular location is the endoplasmic reticulum. The protein localises to the perinuclear region. It localises to the cytoskeleton. The protein resides in the microtubule organizing center. It is found in the centrosome. It carries out the reaction Thiol-dependent hydrolysis of ester, thioester, amide, peptide and isopeptide bonds formed by the C-terminal Gly of ubiquitin (a 76-residue protein attached to proteins as an intracellular targeting signal).. In terms of biological role, deubiquitinating enzyme that plays a role in many cellular processes including autophagy, cellular antiviral response or membrane protein biogenesis. Attenuates TLR4-mediated NF-kappa-B signaling by cooperating with beta-arrestin-2/ARRB2 and inhibiting TRAF6 autoubiquitination. Promotes cellular antiviral responses by deconjugating 'Lys-33' and 'Lys-48'-linked ubiquitination of STING1 leading to its stabilization. Plays an essential role in autophagy induction by regulating the ULK1 stability through deubiquitination of ULK1. Acts as a positive regulator for NF-kappa-B activation by TNF-alpha through deubiquitinating 'Lys-48'-linked polyubiquitination of SQSTM1, leading to its increased stability. Acts as a regulator of G-protein coupled receptor (GPCR) signaling by mediating the deubiquitination beta-2 adrenergic receptor (ADRB2). Plays a central role in ADRB2 recycling and resensitization after prolonged agonist stimulation by constitutively binding ADRB2, mediating deubiquitination of ADRB2 and inhibiting lysosomal trafficking of ADRB2. Upon dissociation, it is probably transferred to the translocated beta-arrestins, possibly leading to beta-arrestins deubiquitination and disengagement from ADRB2. This suggests the existence of a dynamic exchange between the ADRB2 and beta-arrestins. Deubiquitinates DIO2, thereby regulating thyroid hormone regulation. Deubiquitinates HIF1A, leading to stabilize HIF1A and enhance HIF1A-mediated activity. Deubiquitinates MCL1, a pivotal member of the anti-apoptotic Bcl-2 protein family to regulate its stability. Within the endoplasmic reticulum, participates with USP33 in the rescue of post-translationally targeted membrane proteins that are inappropriately ubiquitinated by the cytosolic protein quality control in the cytosol. This is Ubiquitin carboxyl-terminal hydrolase 20 (Usp20) from Mus musculus (Mouse).